Consider the following 1331-residue polypeptide: NPC1-like intracellular cholesterol transporter 1 (1331 aa).

The first 20 residues, 1 to 20 (MAAAWLGWLLWALLLSAAQG), serve as a signal peptide directing secretion. Topologically, residues 21–282 (ELYTPKHEAG…RPSFYMGRMP (262 aa)) are extracellular. Cystine bridges form between Cys-32–Cys-90, Cys-38–Cys-56, Cys-77–Cys-125, Cys-91–Cys-129, Cys-113–Cys-254, Cys-116–Cys-172, Cys-189–Cys-197, Cys-243–Cys-259, and Cys-256–Cys-263. 2 N-linked (GlcNAc...) asparagine glycosylation sites follow: Asn-53 and Asn-85. Residue Asn-138 is glycosylated (N-linked (GlcNAc...) asparagine). Residue Asn-244 is glycosylated (N-linked (GlcNAc...) asparagine). The chain crosses the membrane as a helical span at residues 283–303 (GWLALIIIFTAVFVLLSAVLV). The Cytoplasmic portion of the chain corresponds to 304–352 (RLRVVSNRNKNKAEGPQEAPKLPHKHKLSPHTILGRFFQNWGTRVASWP). Residues 353–373 (LTVLALSFIVVIALAAGLTFI) form a helical membrane-spanning segment. At 374–632 (ELTTDPVELW…DEINRTTIQD (259 aa)) the chain is on the extracellular side. Residues Asn-416, Asn-431, Asn-464, Asn-479, Asn-497, and Asn-506 are each glycosylated (N-linked (GlcNAc...) asparagine). A disulfide bridge connects residues Cys-471 and Cys-485. A disulfide bridge links Cys-525 with Cys-542. N-linked (GlcNAc...) asparagine glycans are attached at residues Asn-606 and Asn-626. The region spanning 632 to 797 (DLPVFAVSYI…MTAFVALLSL (166 aa)) is the SSD domain. A helical transmembrane segment spans residues 633–653 (LPVFAVSYIIVFLYISLALGS). The Cytoplasmic segment spans residues 654 to 665 (YSRCSRVAVESK). Residues 666-686 (ATLGLGGVIVVLGAVLAAMGF) form a helical membrane-spanning segment. Over 687–696 (YSYLGVPSSL) the chain is Extracellular. Residues 697-717 (VIIQVVPFLVLAVGADNIFIF) form a helical membrane-spanning segment. At 718–742 (VLEYQRLPRMPGEQREAHIGRTLGS) the chain is on the cytoplasmic side. A helical membrane pass occupies residues 743–763 (VAPSMLLCSLSEAICFFLGAL). Over 764–776 (TPMPAVRTFALTS) the chain is Extracellular. A helical membrane pass occupies residues 777-797 (GLAIILDFLLQMTAFVALLSL). At 798–846 (DSKRQEASRPDVLCCFSTRKLPPPKEKEGLLLRFFRKIYAPFLLHRFIR) the chain is on the cytoplasmic side. A helical transmembrane segment spans residues 847 to 867 (PVVMLLFLTLFGANLYLMCNI). Residues 868-1113 (NVGLDQELAL…QQYLTVLPEG (246 aa)) are Extracellular-facing. N-linked (GlcNAc...) asparagine glycans are attached at residues Asn-909 and Asn-917. 3 cysteine pairs are disulfide-bonded: Cys-920–Cys-925, Cys-967–Cys-1025, and Cys-981–Cys-990. N-linked (GlcNAc...) asparagine glycosylation is found at Asn-996, Asn-1038, and Asn-1076. Residues 1114–1134 (IFTLALCFVPTFVVCYLLLGL) traverse the membrane as a helical segment. Residues 1135-1142 (DMCSGILN) lie on the Cytoplasmic side of the membrane. Residues 1143 to 1163 (LLSIIMILVDTIGLMAVWGIS) traverse the membrane as a helical segment. Topologically, residues 1164 to 1165 (YN) are extracellular. A helical membrane pass occupies residues 1166 to 1186 (AVSLINLVTAVGMSVEFVSHI). Over 1187 to 1206 (TRSFAVSTKPTRLERAKDAT) the chain is Cytoplasmic. The chain crosses the membrane as a helical span at residues 1207–1227 (VFMGSAVFAGVAMTNFPGILI). The Extracellular portion of the chain corresponds to 1228–1242 (LGFAQAQLIQIFFFR). The helical transmembrane segment at 1243 to 1263 (LNLLITLLGLLHGLVFLPVVL) threads the bilayer. At 1264 to 1331 (SYLGPDVNQA…SSLPKSDQKF (68 aa)) the chain is on the cytoplasmic side.

The protein belongs to the patched family. Interacts with RAB11A, MYO5B and RAB11FIP2. Interaction with RAB11A, MYO5B and RAB11FIP2 is required for proper transport to the plasma membrane upon cholesterol depletion. Interacts with NPC2. Interacts with LIMA1. Post-translationally, highly glycosylated. In terms of tissue distribution, small intestine showed the highest level of expression. Expression in other tissues including gall bladder, liver, testis and stomach is also observed. Along the duodenum-ileum axis, the levels vary in different segments of the intestine with peak expression in the proximal jejunum. Protein expression is confined to the enterocyte. Discrete localization to the epithelial layer bordering the luminal space along the crypt-villus axis. Protein expression in the enterocyte is observed closest to the luminal space. Expression in enterocytes from the proximal (jejunum) but not in the distal (ileum) region.

Its subcellular location is the apical cell membrane. The protein resides in the cell membrane. It carries out the reaction cholesterol(in) = cholesterol(out). The enzyme catalyses sitosterol(out) = sitosterol(in). Functionally, plays a major role in cholesterol homeostasis. Critical for the uptake of cholesterol across the plasma membrane of the intestinal enterocyte. Involved in plant sterol absorption, it transports sitosterol, although at lower rates than cholesterol. Is the direct molecular target of ezetimibe, a drug that inhibits cholesterol absorption and is approved for the treatment of hypercholesterolemia. May have a function in the transport of multiple lipids and their homeostasis, thereby influencing lipid metabolism regulation. May be involved in caveolin trafficking from the plasma membrane. Acts as a negative regulator of NPC2 and down-regulates its expression and secretion by inhibiting its maturation and accelerating its degradation. The protein is NPC1-like intracellular cholesterol transporter 1 of Rattus norvegicus (Rat).